The following is a 197-amino-acid chain: 3-isopropylmalate dehydratase small subunit (197 aa).

The protein belongs to the LeuD family. LeuD type 1 subfamily. As to quaternary structure, heterodimer of LeuC and LeuD.

The enzyme catalyses (2R,3S)-3-isopropylmalate = (2S)-2-isopropylmalate. It functions in the pathway amino-acid biosynthesis; L-leucine biosynthesis; L-leucine from 3-methyl-2-oxobutanoate: step 2/4. Functionally, catalyzes the isomerization between 2-isopropylmalate and 3-isopropylmalate, via the formation of 2-isopropylmaleate. The polypeptide is 3-isopropylmalate dehydratase small subunit (Streptomyces griseus subsp. griseus (strain JCM 4626 / CBS 651.72 / NBRC 13350 / KCC S-0626 / ISP 5235)).